Here is a 167-residue protein sequence, read N- to C-terminus: Methylated-DNA--protein-cysteine methyltransferase (167 aa).

Cysteine 128 (nucleophile; methyl group acceptor) is an active-site residue.

The protein belongs to the MGMT family.

The protein resides in the cytoplasm. It catalyses the reaction a 6-O-methyl-2'-deoxyguanosine in DNA + L-cysteinyl-[protein] = S-methyl-L-cysteinyl-[protein] + a 2'-deoxyguanosine in DNA. It carries out the reaction a 4-O-methyl-thymidine in DNA + L-cysteinyl-[protein] = a thymidine in DNA + S-methyl-L-cysteinyl-[protein]. Involved in the cellular defense against the biological effects of O6-methylguanine (O6-MeG) and O4-methylthymine (O4-MeT) in DNA. Repairs the methylated nucleobase in DNA by stoichiometrically transferring the methyl group to a cysteine residue in the enzyme. This is a suicide reaction: the enzyme is irreversibly inactivated. The chain is Methylated-DNA--protein-cysteine methyltransferase from Methanocaldococcus jannaschii (strain ATCC 43067 / DSM 2661 / JAL-1 / JCM 10045 / NBRC 100440) (Methanococcus jannaschii).